A 325-amino-acid chain; its full sequence is Isoaspartyl peptidase/L-asparaginase (325 aa).

Catalysis depends on Thr193, which acts as the Nucleophile. Residues 221–224 (RIGD) and 243–246 (TGKG) each bind substrate.

It belongs to the Ntn-hydrolase family. As to quaternary structure, heterotetramer of two alpha and two beta chains arranged as a dimer of alpha/beta heterodimers. In terms of processing, cleaved into an alpha and beta chain by autocatalysis; this activates the enzyme. The N-terminal residue of the beta subunit is responsible for the nucleophile hydrolase activity. Developing seeds.

It catalyses the reaction Cleavage of a beta-linked Asp residue from the N-terminus of a polypeptide.. Its function is as follows. Acts in asparagine catabolism but also in the final steps of protein degradation via hydrolysis of a range of isoaspartyl dipeptides. The polypeptide is Isoaspartyl peptidase/L-asparaginase (Lupinus angustifolius (Narrow-leaved blue lupine)).